A 350-amino-acid chain; its full sequence is Probable dual-specificity RNA methyltransferase RlmN (350 aa).

Positions A105–N342 constitute a Radical SAM core domain. A disulfide bond links C112 and C345. [4Fe-4S] cluster-binding residues include C119, C123, and C126. S-adenosyl-L-methionine contacts are provided by residues G166 to E167, S198, S221 to H223, and N302. C345 functions as the S-methylcysteine intermediate in the catalytic mechanism.

Belongs to the radical SAM superfamily. RlmN family. [4Fe-4S] cluster serves as cofactor.

The protein resides in the cytoplasm. The enzyme catalyses adenosine(2503) in 23S rRNA + 2 reduced [2Fe-2S]-[ferredoxin] + 2 S-adenosyl-L-methionine = 2-methyladenosine(2503) in 23S rRNA + 5'-deoxyadenosine + L-methionine + 2 oxidized [2Fe-2S]-[ferredoxin] + S-adenosyl-L-homocysteine. It catalyses the reaction adenosine(37) in tRNA + 2 reduced [2Fe-2S]-[ferredoxin] + 2 S-adenosyl-L-methionine = 2-methyladenosine(37) in tRNA + 5'-deoxyadenosine + L-methionine + 2 oxidized [2Fe-2S]-[ferredoxin] + S-adenosyl-L-homocysteine. In terms of biological role, specifically methylates position 2 of adenine 2503 in 23S rRNA and position 2 of adenine 37 in tRNAs. In Endomicrobium trichonymphae, this protein is Probable dual-specificity RNA methyltransferase RlmN.